Here is a 1174-residue protein sequence, read N- to C-terminus: ATP-dependent DNA helicase SRS2 (1174 aa).

The 303-residue stretch at 14–316 folds into the UvrD-like helicase ATP-binding domain; it reads QLNTQQRAAA…IILVENYRSS (303 aa). 38 to 43 contributes to the ATP binding site; sequence GTGKTK. The segment at 222–243 is leucine-zipper; the sequence is LLMYTFRLLTRVRVLSNIKHVL. An ATP-binding site is contributed by Arg314. The UvrD-like helicase C-terminal domain occupies 317 to 654; it reads QKILNTSEIL…TISTIHGAKG (338 aa). Residues 676 to 704 are disordered; sequence DDKKDESEEDEEEDQENSKKDASPKKTRV. Residue Ser833 is modified to Phosphoserine. 3 disordered regions span residues 865–896, 909–973, and 994–1024; these read SKIN…SPTK, NVPS…DKVT, and ELHP…SNSD. Composition is skewed to polar residues over residues 909 to 922 and 935 to 955; these read NVPS…STGK and TDIS…NKTS. Basic and acidic residues predominate over residues 956–973; it reads HMSDDLMRPSPTRKDKVT. The segment covering 1007–1023 has biased composition (low complexity); the sequence is SLTSSEFSGFSSACSNS.

The protein belongs to the helicase family. UvrD subfamily.

It is found in the nucleus. The enzyme catalyses Couples ATP hydrolysis with the unwinding of duplex DNA by translocating in the 3'-5' direction.. The catalysed reaction is ATP + H2O = ADP + phosphate + H(+). Its function is as follows. ATP-dependent DNA helicase involved in DNA repair at least for UV-induced lesions. The polarity of the helicase activity was determined to be 3' to 5'. This is ATP-dependent DNA helicase SRS2 (SRS2) from Saccharomyces cerevisiae (strain ATCC 204508 / S288c) (Baker's yeast).